The sequence spans 490 residues: Velvet complex subunit 2 (490 aa).

2 disordered regions span residues Leu-23–Gln-148 and Tyr-295–Pro-316. Residues Pro-54–Gln-70 show a composition bias toward basic residues. Positions Ala-112–Asp-131 are enriched in basic and acidic residues. In terms of domain architecture, Velvet spans Ala-164–Arg-474. Positions Tyr-295 to Thr-313 are enriched in polar residues.

It belongs to the velvet family. VelB subfamily. Component of the heterotrimeric velvet complex composed of LAE1, VEL1 and VEL2; VEL1 acting as a bridging protein between LAE1 and VEL2. Forms a heterodimeric complex with VOS1; the formation of the VEL2-VOS1 complex is light-dependent.

It localises to the nucleus. The protein resides in the cytoplasm. Component of the velvet transcription factor complex that controls sexual/asexual developmental ratio in response to light, promoting sexual development in the darkness while stimulating asexual sporulation under illumination. The velvet complex acts as a global regulator for secondary metabolite gene expression. Component of the VEL2-VOS1 heterodimeric complex that plays a dual role in activating genes associated with spore maturation and repressing certain development-associated genes. The VEL2-VOS1 complex binds DNA through the DNA-binding domain of VOS1 that recognizes an 11-nucleotide consensus sequence 5'-CTGGCCGCGGC-3' consisting of two motifs in the promoters of key developmental regulatory genes. Regulates expression of cellulase-encoding genes such as the cellobiohydrolase-encoding genes cbh1 and cbh2, the endo-beta-1,4-glucanase-encoding genes egl1 and egl2, and the beta-glucosidase-encoding gene bgl1. This chain is Velvet complex subunit 2, found in Hypocrea jecorina (strain QM6a) (Trichoderma reesei).